The chain runs to 291 residues: Shikimate dehydrogenase (NADP(+)) (291 aa).

Shikimate is bound by residues 14-16 (SKS) and Thr61. Lys65 (proton acceptor) is an active-site residue. Glu77 serves as a coordination point for NADP(+). 2 residues coordinate shikimate: Asn86 and Asp102. NADP(+)-binding positions include 139–143 (GAGGA), 164–169 (NRTFSR), and Leu232. Tyr234 contributes to the shikimate binding site. Gly256 contacts NADP(+).

The protein belongs to the shikimate dehydrogenase family. In terms of assembly, homodimer.

The catalysed reaction is shikimate + NADP(+) = 3-dehydroshikimate + NADPH + H(+). It participates in metabolic intermediate biosynthesis; chorismate biosynthesis; chorismate from D-erythrose 4-phosphate and phosphoenolpyruvate: step 4/7. Its function is as follows. Involved in the biosynthesis of the chorismate, which leads to the biosynthesis of aromatic amino acids. Catalyzes the reversible NADPH linked reduction of 3-dehydroshikimate (DHSA) to yield shikimate (SA). The chain is Shikimate dehydrogenase (NADP(+)) from Blochmanniella pennsylvanica (strain BPEN).